Here is a 363-residue protein sequence, read N- to C-terminus: Lipoyl synthase (363 aa).

Positions 55, 60, 66, 81, 85, 88, and 292 each coordinate [4Fe-4S] cluster. One can recognise a Radical SAM core domain in the interval 67–281 (WESREATFLI…SKLAKELGFG (215 aa)). The interval 338–363 (PSEETPVTTRMAKTPAQSNSVAATIR) is disordered. Polar residues predominate over residues 352-363 (PAQSNSVAATIR).

It belongs to the radical SAM superfamily. Lipoyl synthase family. [4Fe-4S] cluster serves as cofactor.

It is found in the cytoplasm. The catalysed reaction is [[Fe-S] cluster scaffold protein carrying a second [4Fe-4S](2+) cluster] + N(6)-octanoyl-L-lysyl-[protein] + 2 oxidized [2Fe-2S]-[ferredoxin] + 2 S-adenosyl-L-methionine + 4 H(+) = [[Fe-S] cluster scaffold protein] + N(6)-[(R)-dihydrolipoyl]-L-lysyl-[protein] + 4 Fe(3+) + 2 hydrogen sulfide + 2 5'-deoxyadenosine + 2 L-methionine + 2 reduced [2Fe-2S]-[ferredoxin]. The protein operates within protein modification; protein lipoylation via endogenous pathway; protein N(6)-(lipoyl)lysine from octanoyl-[acyl-carrier-protein]: step 2/2. Its function is as follows. Catalyzes the radical-mediated insertion of two sulfur atoms into the C-6 and C-8 positions of the octanoyl moiety bound to the lipoyl domains of lipoate-dependent enzymes, thereby converting the octanoylated domains into lipoylated derivatives. The protein is Lipoyl synthase of Corynebacterium aurimucosum (strain ATCC 700975 / DSM 44827 / CIP 107346 / CN-1) (Corynebacterium nigricans).